Reading from the N-terminus, the 122-residue chain is MTTSSPTTTTIAKAHGRFIRGSVSKVRRVLDQIRGRTYRDALIMLEFMPYRSTGPITKVLRSAVANAEHNLGLDPASLVIAQASADMGPSMKRYRPRAQGRAFAIKKQTCHISIAVAAQTDS.

It belongs to the universal ribosomal protein uL22 family. In terms of assembly, part of the 50S ribosomal subunit.

Functionally, this protein binds specifically to 23S rRNA; its binding is stimulated by other ribosomal proteins, e.g. L4, L17, and L20. It is important during the early stages of 50S assembly. It makes multiple contacts with different domains of the 23S rRNA in the assembled 50S subunit and ribosome. Its function is as follows. The globular domain of the protein is located near the polypeptide exit tunnel on the outside of the subunit, while an extended beta-hairpin is found that lines the wall of the exit tunnel in the center of the 70S ribosome. The polypeptide is Large ribosomal subunit protein uL22 (Prochlorococcus marinus (strain MIT 9303)).